The primary structure comprises 204 residues: Carbon disulfide hydrolase (204 aa).

Cys-35, His-88, and Cys-91 together coordinate Zn(2+).

This sequence belongs to the beta-class carbonic anhydrase family. As to quaternary structure, forms a hexadecameric catenane homooligomer, through interactions of two interlocked octameric rings. Zn(2+) is required as a cofactor.

It catalyses the reaction carbon disulfide + 2 H2O = 2 hydrogen sulfide + CO2 + 2 H(+). It participates in sulfur metabolism; hydrogen sulfide biosynthesis. Functionally, catalyzes the conversion of carbon disulfide into hydrogen sulfide and carbon dioxide, with carbonyl sulfide as an intermediate. Likely plays a key role in sulfur metabolism in S.solfataricus. Does not show carbonic anhydrase activity (hydration of CO(2) to carbonate). The polypeptide is Carbon disulfide hydrolase (Saccharolobus solfataricus (strain ATCC 35092 / DSM 1617 / JCM 11322 / P2) (Sulfolobus solfataricus)).